The primary structure comprises 23 residues: GVVDILKGAAKDIAGHLASKVMN.

At asparagine 23 the chain carries Asparagine amide.

As to expression, expressed by the skin glands.

It is found in the secreted. Its function is as follows. Antibacterial peptide that inhibits the Gram-negative bacterium A.actinomycetemcomitans ATCC 29522 (MIC=210 uM). No activity against the bacteria E.coli ATCC 25922 and S.aureus ATCC 25923, or the fungi C.albicans ATCC 18804 and C.lusitaniae ATCC 56936. Does not show hemolytic activity towards rabbit erythrocytes. The chain is Ocellatin-LB2 from Leptodactylus labyrinthicus (Labyrinth frog).